Here is a 311-residue protein sequence, read N- to C-terminus: 2-phospho-L-lactate transferase (311 aa).

7,8-didemethyl-8-hydroxy-5-deazariboflavin contacts are provided by Asp-52 and Arg-91.

It belongs to the CofD family. As to quaternary structure, homodimer. The cofactor is Mg(2+).

It carries out the reaction (2S)-lactyl-2-diphospho-5'-guanosine + 7,8-didemethyl-8-hydroxy-5-deazariboflavin = oxidized coenzyme F420-0 + GMP + H(+). It participates in cofactor biosynthesis; coenzyme F420 biosynthesis. With respect to regulation, inhibited by EDTA in vitro. Functionally, catalyzes the transfer of the 2-phospholactate moiety from (2S)-lactyl-2-diphospho-5'-guanosine to 7,8-didemethyl-8-hydroxy-5-deazariboflavin (FO) with the formation of oxidized coenzyme F420-0 and GMP. This Methanocaldococcus jannaschii (strain ATCC 43067 / DSM 2661 / JAL-1 / JCM 10045 / NBRC 100440) (Methanococcus jannaschii) protein is 2-phospho-L-lactate transferase.